Reading from the N-terminus, the 947-residue chain is Bifunctional glutamine synthetase adenylyltransferase/adenylyl-removing enzyme (947 aa).

The interval 1-440 (MTPLSSPLSQ…VFNELIGDDE (440 aa)) is adenylyl removase. The interval 450–947 (SEPWREVWQD…ASWRKWLVAV (498 aa)) is adenylyl transferase.

The protein belongs to the GlnE family. Mg(2+) serves as cofactor.

It catalyses the reaction [glutamine synthetase]-O(4)-(5'-adenylyl)-L-tyrosine + phosphate = [glutamine synthetase]-L-tyrosine + ADP. It carries out the reaction [glutamine synthetase]-L-tyrosine + ATP = [glutamine synthetase]-O(4)-(5'-adenylyl)-L-tyrosine + diphosphate. In terms of biological role, involved in the regulation of glutamine synthetase GlnA, a key enzyme in the process to assimilate ammonia. When cellular nitrogen levels are high, the C-terminal adenylyl transferase (AT) inactivates GlnA by covalent transfer of an adenylyl group from ATP to specific tyrosine residue of GlnA, thus reducing its activity. Conversely, when nitrogen levels are low, the N-terminal adenylyl removase (AR) activates GlnA by removing the adenylyl group by phosphorolysis, increasing its activity. The regulatory region of GlnE binds the signal transduction protein PII (GlnB) which indicates the nitrogen status of the cell. This Salmonella schwarzengrund (strain CVM19633) protein is Bifunctional glutamine synthetase adenylyltransferase/adenylyl-removing enzyme.